Here is a 153-residue protein sequence, read N- to C-terminus: Putative pre-16S rRNA nuclease (153 aa).

The protein belongs to the YqgF nuclease family.

Its subcellular location is the cytoplasm. Functionally, could be a nuclease involved in processing of the 5'-end of pre-16S rRNA. The polypeptide is Putative pre-16S rRNA nuclease (Koribacter versatilis (strain Ellin345)).